A 177-amino-acid chain; its full sequence is Large ribosomal subunit protein uL6 (177 aa).

The interval 154-177 (PEPYKGKGVRYADEQVRRKEAKKK) is disordered. Residues 155-171 (EPYKGKGVRYADEQVRR) are compositionally biased toward basic and acidic residues.

This sequence belongs to the universal ribosomal protein uL6 family. Part of the 50S ribosomal subunit.

Its function is as follows. This protein binds to the 23S rRNA, and is important in its secondary structure. It is located near the subunit interface in the base of the L7/L12 stalk, and near the tRNA binding site of the peptidyltransferase center. This chain is Large ribosomal subunit protein uL6, found in Alcanivorax borkumensis (strain ATCC 700651 / DSM 11573 / NCIMB 13689 / SK2).